Consider the following 517-residue polypeptide: Probable cytosol aminopeptidase (517 aa).

Mn(2+)-binding residues include Lys-279 and Asp-284. Lys-291 is a catalytic residue. The Mn(2+) site is built by Asp-302, Asp-361, and Glu-363. Arg-365 is a catalytic residue.

The protein belongs to the peptidase M17 family. Mn(2+) is required as a cofactor.

The protein resides in the cytoplasm. The enzyme catalyses Release of an N-terminal amino acid, Xaa-|-Yaa-, in which Xaa is preferably Leu, but may be other amino acids including Pro although not Arg or Lys, and Yaa may be Pro. Amino acid amides and methyl esters are also readily hydrolyzed, but rates on arylamides are exceedingly low.. It catalyses the reaction Release of an N-terminal amino acid, preferentially leucine, but not glutamic or aspartic acids.. In terms of biological role, presumably involved in the processing and regular turnover of intracellular proteins. Catalyzes the removal of unsubstituted N-terminal amino acids from various peptides. The polypeptide is Probable cytosol aminopeptidase (Streptomyces coelicolor (strain ATCC BAA-471 / A3(2) / M145)).